Consider the following 146-residue polypeptide: MVMGLGLFLLVFMLGLGLTPPTLAQDNSRYRDFLTKHYDATPQGRNDRYCESMMRRRGLTSPCKDINTFIHGNSRHIKAICGDENGNPYGENLRISKSPFQVTTCNLRGGSSRPPCRYRATAGFRNIVVACENDLPVHLDQSIFRP.

An N-terminal signal peptide occupies residues 1–24 (MVMGLGLFLLVFMLGLGLTPPTLA). Residue Gln25 is modified to Pyrrolidone carboxylic acid. Residue His37 is the Proton acceptor of the active site. Arg45 serves as a coordination point for tRNA. Intrachain disulfides connect Cys50–Cys105, Cys63–Cys116, and Cys81–Cys131. The Nucleolar localization signal motif lies at 55–59 (RRRGL). TRNA is bound by residues Cys105 and Ile127. Residue His138 is the Proton donor of the active site.

This sequence belongs to the pancreatic ribonuclease family. Homodimer. Interacts with RNH1; inhibiting ANG ribonuclease activity. Interacts with PCNA.

The protein resides in the secreted. It is found in the nucleus. Its subcellular location is the nucleolus. The protein localises to the cytoplasm. It localises to the stress granule. With respect to regulation, has weak tRNA ribonuclease activity by itself due to partial autoinhibition by its C-terminus, which folds into a short alpha-helix that partially occludes the substrate-binding site. In absence of stress, the ribonuclease activity is inhibited by RNH1 in the cytoplasm. In response to stress, dissociates from RNH1 in the cytoplasm and associates with cytoplasmic ribosomes with vacant A-sites: ribosomes directly activate the tRNA ribonuclease activity of ANG by refolding the C-terminal alpha-helix. In response to stress, the angiogenic activity of ANG is inhibited by RNH1 in the nucleus. In terms of biological role, secreted ribonuclease that can either promote or restrict cell proliferation of target cells, depending on the context. Endocytosed in target cells via its receptor PLXNB2 and translocates to the cytoplasm or nucleus. Under stress conditions, localizes to the cytoplasm and promotes the assembly of stress granules (SGs): specifically cleaves a subset of tRNAs within anticodon loops to produce tRNA-derived stress-induced fragments (tiRNAs), resulting in translation repression and inhibition of cell proliferation. tiRNas also prevent formation of apoptosome, thereby promoting cell survival. Preferentially cleaves RNAs between a pyrimidine and an adenosine residue, suggesting that it cleaves the anticodon loop of tRNA(Ala) (32-UUAGCAU-38) after positions 33 and 36. Cleaves a subset of tRNAs, including tRNA(Ala), tRNA(Glu), tRNA(Gly), tRNA(Lys), tRNA(Val), tRNA(His), tRNA(Asp) and tRNA(Sec). Under growth conditions and in differentiated cells, translocates to the nucleus and stimulates ribosomal RNA (rRNA) transcription, including that containing the initiation site sequences of 45S rRNA, thereby promoting cell growth and proliferation. Angiogenin induces vascularization of normal and malignant tissues via its ability to promote rRNA transcription. Involved in hematopoietic stem and progenitor cell (HSPC) growth and survival by promoting rRNA transcription in growth conditions and inhibiting translation in response to stress, respectively. Mediates the crosstalk between myeloid and intestinal epithelial cells to protect the intestinal epithelial barrier integrity: secreted by myeloid cells and promotes intestinal epithelial cells proliferation and survival. Also mediates osteoclast-endothelial cell crosstalk in growing bone: produced by osteoclasts and protects the neighboring vascular cells against senescence by promoting rRNA transcription. The sequence is that of Angiogenin (ANG) from Rhinopithecus avunculus (Tonkin snub-nosed monkey).